The chain runs to 621 residues: Interferon-induced GTP-binding protein Mx1 (621 aa).

The Dynamin-type G domain maps to D31–P304. The segment at G41–S48 is G1 motif. Position 41–48 (G41–S48) interacts with GTP. Positions V66–R68 are G2 motif. The interval D142–G145 is G3 motif. Residues D142–I146 and T211–D214 each bind GTP. Residues T211 to D214 form a G4 motif region. The interval K243–G246 is G5 motif. The GED domain maps to L535–F621.

It belongs to the TRAFAC class dynamin-like GTPase superfamily. Dynamin/Fzo/YdjA family.

The protein localises to the cytoplasm. Does not inhibit strain RB-1 of the fish pathogen, infectious hematopoietic necrosis virus (IHNV). The chain is Interferon-induced GTP-binding protein Mx1 (mx1) from Oncorhynchus mykiss (Rainbow trout).